The chain runs to 766 residues: MSIMLSISRRRNSYILLNHSRFLRRFSYDVDPRPEIKLESQEFVVVKFVKTLQKTPQHDWASSESLSALVVSSSSASPLVFSQITRRLGSYSLAISFFEYLDAKSQSLKRREESLSLALQSVIEFAGSEPDPRDKLLRLYEIAKEKNIPLTVVATNLLIRWFGRMGMVNQSVLVYERLDSNMKNSQVRNVVVDVLLRNGLVDDAFKVLDEMLQKESVFPPNRITADIVLHEVWKGRLLTEEKIIALISRFSSHGVSPNSVWLTRFISSLCKNARANAAWDILSDLMKNKTPLEAPPFNALLSCLGRNMDISRMNDLVLKMDEVKIRPDVVTLGILINTLCKSRRVDEALEVFEKMRGKRTDDGNVIKADSIHFNTLIDGLCKVGRLKEAEELLVRMKLEERCAPNAVTYNCLIDGYCRAGKLETAKEVVSRMKEDEIKPNVVTVNTIVGGMCRHHGLNMAVVFFMDMEKEGVKGNVVTYMTLIHACCSVSNVEKAMYWYEKMLEAGCSPDAKIYYALISGLCQVRRDHDAIRVVEKLKEGGFSLDLLAYNMLIGLFCDKNNTEKVYEMLTDMEKEGKKPDSITYNTLISFFGKHKDFESVERMMEQMREDGLDPTVTTYGAVIDAYCSVGELDEALKLFKDMGLHSKVNPNTVIYNILINAFSKLGNFGQALSLKEEMKMKMVRPNVETYNALFKCLNEKTQGETLLKLMDEMVEQSCEPNQITMEILMERLSGSDELVKLRKFMQGYSVASPTEKASPFDVFSLG.

A mitochondrion-targeting transit peptide spans 1 to 30 (MSIMLSISRRRNSYILLNHSRFLRRFSYDV). 16 PPR repeats span residues 151–181 (TVVATNLLIRWFGRMGMVNQSVLVYERLDSN), 184–218 (NSQVRNVVVDVLLRNGLVDDAFKVLDEMLQKESVF), 221–257 (NRITADIVLHEVWKGRLLTEEKIIALISRFSSHGVSP), 258–292 (NSVWLTRFISSLCKNARANAAWDILSDLMKNKTPL), 293–327 (EAPPFNALLSCLGRNMDISRMNDLVLKMDEVKIRP), 328–358 (DVVTLGILINTLCKSRRVDEALEVFEKMRGK), 369–404 (DSIHFNTLIDGLCKVGRLKEAEELLVRMKLEERCAP), 405–439 (NAVTYNCLIDGYCRAGKLETAKEVVSRMKEDEIKP), 440–474 (NVVTVNTIVGGMCRHHGLNMAVVFFMDMEKEGVKG), 475–509 (NVVTYMTLIHACCSVSNVEKAMYWYEKMLEAGCSP), 510–544 (DAKIYYALISGLCQVRRDHDAIRVVEKLKEGGFSL), 545–579 (DLLAYNMLIGLFCDKNNTEKVYEMLTDMEKEGKKP), 580–614 (DSITYNTLISFFGKHKDFESVERMMEQMREDGLDP), 615–650 (TVTTYGAVIDAYCSVGELDEALKLFKDMGLHSKVNP), 651–685 (NTVIYNILINAFSKLGNFGQALSLKEEMKMKMVRP), and 686–720 (NVETYNALFKCLNEKTQGETLLKLMDEMVEQSCEP).

Belongs to the PPR family. P subfamily.

The protein resides in the mitochondrion. This is Pentatricopeptide repeat-containing protein At3g61520, mitochondrial from Arabidopsis thaliana (Mouse-ear cress).